The following is an 865-amino-acid chain: Xylosyltransferase 2 (865 aa).

The Cytoplasmic segment spans residues 1 to 15; the sequence is MVASARVQKLVRRYK. The chain crosses the membrane as a helical; Signal-anchor for type II membrane protein span at residues 16–36; sequence LAIATALAILLLQGLVVWSFS. Topologically, residues 37–865 are lumenal; it reads GLEEDEAGEK…GPVKADGRLR (829 aa). Positions 41 to 157 are disordered; sequence DEAGEKGRQR…EGAPQPTDNG (117 aa). Basic and acidic residues predominate over residues 53–65; sequence RPLDPGEGSKDTD. The segment covering 73–82 has biased composition (basic residues); the sequence is STGRRHGRWR. N-linked (GlcNAc...) asparagine glycosylation occurs at Asn122. Low complexity predominate over residues 125–137; the sequence is GAAAGEALVGAAG. Intrachain disulfides connect Cys162–Cys190, Cys206–Cys448, Cys467–Cys480, and Cys469–Cys478. UDP-alpha-D-xylose is bound by residues Val239, Asp267, and 296–298; that span reads TIW. A glycan (N-linked (GlcNAc...) asparagine) is linked at Asn327. 400 to 401 contacts UDP-alpha-D-xylose; that stretch reads DW. Residues Ser481 and 504–505 contribute to the UDP-alpha-D-xylose site; that span reads RK. Cystine bridges form between Cys581/Cys833 and Cys826/Cys839. A glycan (N-linked (GlcNAc...) asparagine) is linked at Asn683. Residues 846–865 are disordered; the sequence is SLSPDPKSELGPVKADGRLR.

This sequence belongs to the glycosyltransferase 14 family. XylT subfamily. In terms of assembly, monomer. Requires Mg(2+) as cofactor. Mn(2+) serves as cofactor. In terms of processing, contains disulfide bonds. In terms of tissue distribution, widely expressed. Expressed at higher level in kidney and pancreas.

It is found in the golgi apparatus membrane. It localises to the secreted. The catalysed reaction is UDP-alpha-D-xylose + L-seryl-[protein] = 3-O-(beta-D-xylosyl)-L-seryl-[protein] + UDP + H(+). The protein operates within glycan metabolism; chondroitin sulfate biosynthesis. Its pathway is glycan metabolism; heparan sulfate biosynthesis. In terms of biological role, catalyzes the first step in the biosynthesis of chondroitin sulfate, heparan sulfate and dermatan sulfate proteoglycans, such as DCN. Transfers D-xylose from UDP-D-xylose to specific serine residues of the core protein. The polypeptide is Xylosyltransferase 2 (XYLT2) (Homo sapiens (Human)).